The chain runs to 580 residues: NADH-ubiquinone oxidoreductase chain 5 (580 aa).

The next 16 membrane-spanning stretches (helical) occupy residues 12 to 32, 50 to 70, 92 to 112, 113 to 133, 153 to 173, 176 to 196, 218 to 240, 249 to 269, 274 to 294, 300 to 320, 343 to 363, 378 to 400, 427 to 447, 464 to 484, 500 to 520, and 560 to 580; these read FYIL…FLLM, IVMT…VLLI, ILLV…PNLI, SILL…IYFQ, VALL…YIFY, MMKN…AAMT, SALV…FNIL, FLLL…NFEF, IIAL…SIGY, FHLL…GVII, CSCF…AGFY, NFFS…FRLV, IFFL…LMFF, MVCL…FFFI, MWFM…ILGM, and IYLL…LFLN.

Belongs to the complex I subunit 5 family.

The protein localises to the mitochondrion inner membrane. It carries out the reaction a ubiquinone + NADH + 5 H(+)(in) = a ubiquinol + NAD(+) + 4 H(+)(out). Functionally, core subunit of the mitochondrial membrane respiratory chain NADH dehydrogenase (Complex I) that is believed to belong to the minimal assembly required for catalysis. Complex I functions in the transfer of electrons from NADH to the respiratory chain. The immediate electron acceptor for the enzyme is believed to be ubiquinone. The polypeptide is NADH-ubiquinone oxidoreductase chain 5 (Aedes aegypti (Yellowfever mosquito)).